The following is a 990-amino-acid chain: Aminopeptidase Q (990 aa).

Over 2–13 (GPPSSSGFYVSR) the chain is Cytoplasmic. The chain crosses the membrane as a helical; Signal-anchor for type II membrane protein span at residues 14-34 (AVALLLAGLVAALLLALAVLA). Residues 35-990 (ALYGHCERVP…RIAAWLRRNT (956 aa)) lie on the Lumenal side of the membrane. A disordered region spans residues 48–91 (LPGLRDLEAESSPPLRQKPTPTPKPSSARELAVTTTPSNWRPPG). 2 N-linked (GlcNAc...) asparagine glycosylation sites follow: asparagine 132 and asparagine 168. Glutamate 240 contributes to the substrate binding site. N-linked (GlcNAc...) asparagine glycosylation is found at asparagine 261, asparagine 288, asparagine 319, and asparagine 346. Residue 379–383 (HAMEN) participates in substrate binding. Histidine 415 contributes to the Zn(2+) binding site. Glutamate 416 serves as the catalytic Proton acceptor. Residues histidine 419 and glutamate 438 each coordinate Zn(2+). Catalysis depends on tyrosine 503, which acts as the Proton donor. N-linked (GlcNAc...) asparagine glycans are attached at residues asparagine 607 and asparagine 653.

Belongs to the peptidase M1 family. Homodimer. Requires Zn(2+) as cofactor. In terms of processing, N-glycosylated. In terms of tissue distribution, specifically expressed in placenta and not in other tissues. Mainly found at the cell surface region of the extravillous trophoblasts. Detected on extravillous trophoblasts in the outer layer of the chorion laeve in the fetal membrane Not detected on either fetal amnionic epithelial cells or maternal decidual cells. Also detected in the migrating extravillous trophoblasts in the maternal decidual tissues (at protein level).

It is found in the membrane. With respect to regulation, inhibited by bestatin. Metalloprotease which may be important for placentation by regulating biological activity of key peptides at the embryo-maternal interface. On synthetic substrates it shows a marked preference for Leu-4-methylcoumaryl-7-amide (Leu-MCA) over Met-MCA, Arg-LCA and Lys-LCA. Cleaves the N-terminal amino acid of several peptides such as angiotensin-3, kisspeptin-10 and endokinin C. This chain is Aminopeptidase Q, found in Homo sapiens (Human).